A 54-amino-acid chain; its full sequence is Sec-independent protein translocase protein TatA (54 aa).

Residues 1–21 form a helical membrane-spanning segment; it reads MGMSFSHLLIVLLIIFVLFGA.

This sequence belongs to the TatA/E family. As to quaternary structure, the Tat system comprises two distinct complexes: a TatABC complex, containing multiple copies of TatA, TatB and TatC subunits, and a separate TatA complex, containing only TatA subunits. Substrates initially bind to the TatABC complex, which probably triggers association of the separate TatA complex to form the active translocon.

It localises to the cell inner membrane. Part of the twin-arginine translocation (Tat) system that transports large folded proteins containing a characteristic twin-arginine motif in their signal peptide across membranes. TatA could form the protein-conducting channel of the Tat system. The sequence is that of Sec-independent protein translocase protein TatA from Rickettsia canadensis (strain McKiel).